The following is a 344-amino-acid chain: Phenylalanine--tRNA ligase alpha subunit (344 aa).

E261 provides a ligand contact to Mg(2+).

The protein belongs to the class-II aminoacyl-tRNA synthetase family. Phe-tRNA synthetase alpha subunit type 1 subfamily. As to quaternary structure, tetramer of two alpha and two beta subunits. It depends on Mg(2+) as a cofactor.

The protein localises to the cytoplasm. The enzyme catalyses tRNA(Phe) + L-phenylalanine + ATP = L-phenylalanyl-tRNA(Phe) + AMP + diphosphate + H(+). This is Phenylalanine--tRNA ligase alpha subunit from Ehrlichia ruminantium (strain Gardel).